Here is a 177-residue protein sequence, read N- to C-terminus: ATP synthase subunit b (177 aa).

A helical transmembrane segment spans residues 15–35 (GISGGTIIYQLLMFIILLALL).

The protein belongs to the ATPase B chain family. As to quaternary structure, F-type ATPases have 2 components, F(1) - the catalytic core - and F(0) - the membrane proton channel. F(1) has five subunits: alpha(3), beta(3), gamma(1), delta(1), epsilon(1). F(0) has three main subunits: a(1), b(2) and c(10-14). The alpha and beta chains form an alternating ring which encloses part of the gamma chain. F(1) is attached to F(0) by a central stalk formed by the gamma and epsilon chains, while a peripheral stalk is formed by the delta and b chains.

It localises to the cell membrane. In terms of biological role, f(1)F(0) ATP synthase produces ATP from ADP in the presence of a proton or sodium gradient. F-type ATPases consist of two structural domains, F(1) containing the extramembraneous catalytic core and F(0) containing the membrane proton channel, linked together by a central stalk and a peripheral stalk. During catalysis, ATP synthesis in the catalytic domain of F(1) is coupled via a rotary mechanism of the central stalk subunits to proton translocation. Functionally, component of the F(0) channel, it forms part of the peripheral stalk, linking F(1) to F(0). The chain is ATP synthase subunit b from Geobacillus kaustophilus (strain HTA426).